The primary structure comprises 338 residues: Isopentenyl-diphosphate delta-isomerase (338 aa).

A substrate-binding site is contributed by 13–14 (RK). FMN is bound by residues 72-74 (AMT), Ser102, and Asn130. 102–104 (SQR) lines the substrate pocket. Gln165 is a binding site for substrate. Mg(2+) is bound at residue Glu166. FMN contacts are provided by residues Lys197, Thr227, 274–276 (GIR), and 295–296 (AR).

Belongs to the IPP isomerase type 2 family. In terms of assembly, homooctamer. Dimer of tetramers. The cofactor is FMN. NADPH serves as cofactor. Requires Mg(2+) as cofactor.

It is found in the cytoplasm. The enzyme catalyses isopentenyl diphosphate = dimethylallyl diphosphate. Involved in the biosynthesis of isoprenoids. Catalyzes the 1,3-allylic rearrangement of the homoallylic substrate isopentenyl (IPP) to its allylic isomer, dimethylallyl diphosphate (DMAPP). The chain is Isopentenyl-diphosphate delta-isomerase from Deinococcus radiodurans (strain ATCC 13939 / DSM 20539 / JCM 16871 / CCUG 27074 / LMG 4051 / NBRC 15346 / NCIMB 9279 / VKM B-1422 / R1).